The primary structure comprises 29 residues: Cytochrome b6-f complex subunit 8 (29 aa).

A helical membrane pass occupies residues 3–23; it reads IVSLAWASLMVVFTFSLSLVV.

It belongs to the PetN family. In terms of assembly, the 4 large subunits of the cytochrome b6-f complex are cytochrome b6, subunit IV (17 kDa polypeptide, PetD), cytochrome f and the Rieske protein, while the 4 small subunits are PetG, PetL, PetM and PetN. The complex functions as a dimer.

It localises to the plastid. The protein localises to the chloroplast thylakoid membrane. Its function is as follows. Component of the cytochrome b6-f complex, which mediates electron transfer between photosystem II (PSII) and photosystem I (PSI), cyclic electron flow around PSI, and state transitions. This Coffea arabica (Arabian coffee) protein is Cytochrome b6-f complex subunit 8.